We begin with the raw amino-acid sequence, 316 residues long: MST50-interacting protein 11 (316 aa).

7 WD repeats span residues glycine 13–glycine 53, glycine 61–arginine 100, glycine 103–isoleucine 142, glycine 146–aspartate 187, glycine 190–serine 229, asparagine 231–glutamate 269, and serine 281–alanine 316.

It belongs to the WD repeat G protein beta family. Ribosomal protein RACK1 subfamily. In terms of assembly, interacts with MST50 and MCK1.

Functionally, involved in regulating the cell wall integrity and MPS1 activation via its interaction with the MAPKKK MCK1. The polypeptide is MST50-interacting protein 11 (Pyricularia oryzae (strain 70-15 / ATCC MYA-4617 / FGSC 8958) (Rice blast fungus)).